The following is a 239-amino-acid chain: Dephospho-CoA kinase (239 aa).

A DPCK domain is found at 3–206 (IIGLTGSIAS…GGEGGEPAAG (204 aa)). Position 11–16 (11–16 (ASGKST)) interacts with ATP. Residues 197–239 (GGEGGEPAAGSSAHHGAGSVDPGAGPCDGPGAAPEAERRGGDR) form a disordered region. Residues 204 to 230 (AAGSSAHHGAGSVDPGAGPCDGPGAAP) show a composition bias toward low complexity.

The protein belongs to the CoaE family.

The protein localises to the cytoplasm. It carries out the reaction 3'-dephospho-CoA + ATP = ADP + CoA + H(+). Its pathway is cofactor biosynthesis; coenzyme A biosynthesis; CoA from (R)-pantothenate: step 5/5. Its function is as follows. Catalyzes the phosphorylation of the 3'-hydroxyl group of dephosphocoenzyme A to form coenzyme A. This Symbiobacterium thermophilum (strain DSM 24528 / JCM 14929 / IAM 14863 / T) protein is Dephospho-CoA kinase.